The chain runs to 352 residues: Biotin synthase (352 aa).

Residues 44–262 (NRVQVSTLLS…LAVARILMPQ (219 aa)) enclose the Radical SAM core domain. [4Fe-4S] cluster-binding residues include Cys59, Cys63, and Cys66. [2Fe-2S] cluster is bound by residues Cys103, Cys134, Cys194, and Arg266.

The protein belongs to the radical SAM superfamily. Biotin synthase family. In terms of assembly, homodimer. Requires [4Fe-4S] cluster as cofactor. [2Fe-2S] cluster is required as a cofactor.

The catalysed reaction is (4R,5S)-dethiobiotin + (sulfur carrier)-SH + 2 reduced [2Fe-2S]-[ferredoxin] + 2 S-adenosyl-L-methionine = (sulfur carrier)-H + biotin + 2 5'-deoxyadenosine + 2 L-methionine + 2 oxidized [2Fe-2S]-[ferredoxin]. Its pathway is cofactor biosynthesis; biotin biosynthesis; biotin from 7,8-diaminononanoate: step 2/2. Functionally, catalyzes the conversion of dethiobiotin (DTB) to biotin by the insertion of a sulfur atom into dethiobiotin via a radical-based mechanism. The chain is Biotin synthase from Pseudomonas savastanoi pv. phaseolicola (strain 1448A / Race 6) (Pseudomonas syringae pv. phaseolicola (strain 1448A / Race 6)).